The following is an 80-amino-acid chain: U-Asilidin(1)-Dg12 (80 aa).

The N-terminal stretch at 1–24 is a signal peptide; it reads MARLLVVSVGVFLAVIMLSSETMS. A propeptide spanning residues 25 to 46 is cleaved from the precursor; sequence LPAGENLPALTLFEAQNQLIGL. 3 disulfide bridges follow: Cys53/Cys67, Cys60/Cys71, and Cys66/Cys78.

It belongs to the asilidin-1 family. As to expression, expressed by the venom gland.

The protein localises to the secreted. Neurotoxin that may modulate ions channels (other than those tested). In vivo, induces neurotoxic effects when injected into insects (tested on L.cuprina and A.domesticus). The sequence is that of U-Asilidin(1)-Dg12 from Dolopus genitalis (Giant Australian assassin fly).